Here is a 201-residue protein sequence, read N- to C-terminus: ATP-dependent Clp protease proteolytic subunit (201 aa).

Residue S98 is the Nucleophile of the active site. H123 is an active-site residue.

The protein belongs to the peptidase S14 family. Fourteen ClpP subunits assemble into 2 heptameric rings which stack back to back to give a disk-like structure with a central cavity, resembling the structure of eukaryotic proteasomes.

Its subcellular location is the cytoplasm. The enzyme catalyses Hydrolysis of proteins to small peptides in the presence of ATP and magnesium. alpha-casein is the usual test substrate. In the absence of ATP, only oligopeptides shorter than five residues are hydrolyzed (such as succinyl-Leu-Tyr-|-NHMec, and Leu-Tyr-Leu-|-Tyr-Trp, in which cleavage of the -Tyr-|-Leu- and -Tyr-|-Trp bonds also occurs).. Cleaves peptides in various proteins in a process that requires ATP hydrolysis. Has a chymotrypsin-like activity. Plays a major role in the degradation of misfolded proteins. In Neorickettsia sennetsu (strain ATCC VR-367 / Miyayama) (Ehrlichia sennetsu), this protein is ATP-dependent Clp protease proteolytic subunit.